The chain runs to 877 residues: Leucine--tRNA ligase (877 aa).

Residues proline 43–histidine 53 carry the 'HIGH' region motif. The 'KMSKS' region signature appears at lysine 628 to serine 632. Lysine 631 is an ATP binding site.

This sequence belongs to the class-I aminoacyl-tRNA synthetase family.

The protein resides in the cytoplasm. It carries out the reaction tRNA(Leu) + L-leucine + ATP = L-leucyl-tRNA(Leu) + AMP + diphosphate. The sequence is that of Leucine--tRNA ligase from Brucella suis biovar 1 (strain 1330).